The chain runs to 625 residues: Chaperone protein HtpG (625 aa).

Residues 1–337 (MSTNQETRGF…TNDLPLNVSR (337 aa)) are a; substrate-binding. Positions 338–554 (EILQENKITA…NDEMTTQMAK (217 aa)) are b. The tract at residues 555-625 (LFAAMGQKAP…FIKRMNKLLG (71 aa)) is c.

Belongs to the heat shock protein 90 family. As to quaternary structure, homodimer.

The protein resides in the cytoplasm. In terms of biological role, molecular chaperone. Has ATPase activity. This is Chaperone protein HtpG from Actinobacillus pleuropneumoniae serotype 3 (strain JL03).